A 184-amino-acid polypeptide reads, in one-letter code: Flavin prenyltransferase UbiX (184 aa).

FMN contacts are provided by residues 9–11, Ser-34, 85–88, and Arg-120; these read GAS and SMKT. Dimethylallyl phosphate is bound by residues Tyr-150 and Arg-166.

Belongs to the UbiX/PAD1 family.

The catalysed reaction is dimethylallyl phosphate + FMNH2 = prenylated FMNH2 + phosphate. Its function is as follows. Flavin prenyltransferase that catalyzes the synthesis of the prenylated FMN cofactor (prenyl-FMN) for 4-hydroxy-3-polyprenylbenzoic acid decarboxylase UbiD. The prenyltransferase is metal-independent and links a dimethylallyl moiety from dimethylallyl monophosphate (DMAP) to the flavin N5 and C6 atoms of FMN. The protein is Flavin prenyltransferase UbiX of Methanocaldococcus jannaschii (strain ATCC 43067 / DSM 2661 / JAL-1 / JCM 10045 / NBRC 100440) (Methanococcus jannaschii).